The chain runs to 452 residues: MIAAANCLETEKAKLRREIAELQAALNAKEQNLRDLQSRTAASHLDPEADLQHATREQYATLNNDDIARYSRQLILSDFGVSGQLKLKNSAVLIVGLGGLGCPAAQYLCSAGCGNLGLVDYDEVERSNLHRQTLHTVARCGMSKTESARIALLELNPHCRITCYPRLLNSSNAMHIMRAYDIVLDCSDNVATRYLLNDACTMLRKPLVSGSALKLDGQLTVYSYGAQGPCYRCIYPVPPPPEAVTNCGDGGVLGAVTGTIGAMQALEAIKIIIGLGDVLAGRMLIFDGSSCQFRNIKIRSKRPNCHVCSAQPLITGLIDYELFCGMNANDKDNAVKLLEPEERINVLDYQRLMKTKAHLLLDVRAPAEFEICQLPDSINVPLAHVLDDSYLQRFAQQLESKELPIFVVCRRGNDSQIAVQHMRTRLPEHSIRDLEGGLHAWTNQVDQSFPIY.

ATP contacts are provided by residues glycine 99, aspartate 120, 127–131, lysine 144, and 188–189; these read SNLHR and DN. Zn(2+) is bound by residues cysteine 230 and cysteine 233. Cysteine 247 serves as the catalytic Glycyl thioester intermediate; for adenylyltransferase activity. 2 residues coordinate Zn(2+): cysteine 305 and cysteine 308. The region spanning 354 to 450 is the Rhodanese domain; the sequence is KTKAHLLLDV…WTNQVDQSFP (97 aa). Cysteine 409 (cysteine persulfide intermediate; for sulfurtransferase activity) is an active-site residue.

In the N-terminal section; belongs to the HesA/MoeB/ThiF family. UBA4 subfamily. Requires Zn(2+) as cofactor.

The protein localises to the cytoplasm. Its subcellular location is the cytosol. It catalyses the reaction [molybdopterin-synthase sulfur-carrier protein]-C-terminal Gly-Gly + ATP + H(+) = [molybdopterin-synthase sulfur-carrier protein]-C-terminal Gly-Gly-AMP + diphosphate. It carries out the reaction [molybdopterin-synthase sulfur-carrier protein]-C-terminal Gly-Gly-AMP + S-sulfanyl-L-cysteinyl-[cysteine desulfurase] + AH2 = [molybdopterin-synthase sulfur-carrier protein]-C-terminal-Gly-aminoethanethioate + L-cysteinyl-[cysteine desulfurase] + A + AMP + 2 H(+). The protein operates within tRNA modification; 5-methoxycarbonylmethyl-2-thiouridine-tRNA biosynthesis. Its pathway is cofactor biosynthesis; molybdopterin biosynthesis. Plays a central role in 2-thiolation of mcm(5)S(2)U at tRNA wobble positions of cytosolic tRNA(Lys), tRNA(Glu) and tRNA(Gln). Also essential during biosynthesis of the molybdenum cofactor. Acts by mediating the C-terminal thiocarboxylation of sulfur carriers URM1 and MOCS2A. Its N-terminus first activates URM1 and MOCS2A as acyl-adenylates (-COAMP), then the persulfide sulfur on the catalytic cysteine is transferred to URM1 and MOCS2A to form thiocarboxylation (-COSH) of their C-terminus. The reaction probably involves hydrogen sulfide that is generated from the persulfide intermediate and that acts as a nucleophile towards URM1 and MOCS2A. Subsequently, a transient disulfide bond is formed. Does not use thiosulfate as sulfur donor; NFS1 probably acting as a sulfur donor for thiocarboxylation reactions. This is Adenylyltransferase and sulfurtransferase MOCS3 from Drosophila virilis (Fruit fly).